We begin with the raw amino-acid sequence, 156 residues long: 6,7-dimethyl-8-ribityllumazine synthase (156 aa).

Residues F22, 57-59 (AYE), and 81-83 (TVI) contribute to the 5-amino-6-(D-ribitylamino)uracil site. 86–87 (GT) is a (2S)-2-hydroxy-3-oxobutyl phosphate binding site. Residue H89 is the Proton donor of the active site. Position 114 (F114) interacts with 5-amino-6-(D-ribitylamino)uracil. R128 lines the (2S)-2-hydroxy-3-oxobutyl phosphate pocket.

The protein belongs to the DMRL synthase family. As to quaternary structure, forms an icosahedral capsid composed of 60 subunits, arranged as a dodecamer of pentamers.

The catalysed reaction is (2S)-2-hydroxy-3-oxobutyl phosphate + 5-amino-6-(D-ribitylamino)uracil = 6,7-dimethyl-8-(1-D-ribityl)lumazine + phosphate + 2 H2O + H(+). Its pathway is cofactor biosynthesis; riboflavin biosynthesis; riboflavin from 2-hydroxy-3-oxobutyl phosphate and 5-amino-6-(D-ribitylamino)uracil: step 1/2. Its function is as follows. Catalyzes the formation of 6,7-dimethyl-8-ribityllumazine by condensation of 5-amino-6-(D-ribitylamino)uracil with 3,4-dihydroxy-2-butanone 4-phosphate. This is the penultimate step in the biosynthesis of riboflavin. The polypeptide is 6,7-dimethyl-8-ribityllumazine synthase (Sodalis glossinidius (strain morsitans)).